The following is a 125-amino-acid chain: Large ribosomal subunit protein bL12 (125 aa).

It belongs to the bacterial ribosomal protein bL12 family. Homodimer. Part of the ribosomal stalk of the 50S ribosomal subunit. Forms a multimeric L10(L12)X complex, where L10 forms an elongated spine to which 2 to 4 L12 dimers bind in a sequential fashion. Binds GTP-bound translation factors.

Its function is as follows. Forms part of the ribosomal stalk which helps the ribosome interact with GTP-bound translation factors. Is thus essential for accurate translation. This is Large ribosomal subunit protein bL12 from Erythrobacter litoralis (strain HTCC2594).